We begin with the raw amino-acid sequence, 156 residues long: MMVLSGALCFRMKDSALKVLYLHNNQLLAGGLHAEKVIKGEEISVVPNRALDASLSPVILGVQGGSQCLSCGTEKGPILKLEPVNIMELYLGAKESKSFTFYRRDMGLTSSFESAAYPGWFLCTSPEADQPVRLTQIPEDPAWDAPITDFYFQQCD.

A disulfide bridge links Cys-9 with Cys-155.

This sequence belongs to the IL-1 family. As to quaternary structure, interacts with cargo receptor TMED10; the interaction mediates the translocation from the cytoplasm into the ERGIC (endoplasmic reticulum-Golgi intermediate compartment) and thereby secretion. In terms of processing, removal of N-terminal methionine is necessary for full antagonistic activity. In terms of tissue distribution, highly abundant in embryonic tissue and tissues containing epithelial cells.

Its subcellular location is the cytoplasm. The protein localises to the secreted. Functionally, inhibits the activity of interleukin-36 (IL36A,IL36B and IL36G) by binding to receptor IL1RL2/IL-36R and preventing its association with the coreceptor IL1RAP for signaling. Part of the IL-36 signaling system that is thought to be present in epithelial barriers and to take part in local inflammatory response; similar to the IL-1 system with which it shares the coreceptor. Proposed to play a role in skin inflammation. May be involved in the innate immune response to fungal pathogens. May activate an anti-inflammatory signaling pathway by recruiting SIGIRR. This is Interleukin-36 receptor antagonist protein from Mus musculus (Mouse).